Consider the following 256-residue polypeptide: Phosphatidylglycerol--prolipoprotein diacylglyceryl transferase 2 (256 aa).

3 helical membrane-spanning segments follow: residues 11–31 (LKIYSYGFMIGLGIICATLLF), 46–66 (FNATILTVISGILGGKILYII), and 83–103 (FGNGFVIYGAIIGGALGIALC). A 1,2-diacyl-sn-glycero-3-phospho-(1'-sn-glycerol) is bound at residue arginine 130. 3 consecutive transmembrane segments (helical) span residues 142-162 (AETTSSIGIIFPADSLAPAGV), 164-184 (LYPTQIFSSIFDFALGLFLLW), and 221-241 (VGLLSTSQFISIFILIGGILL).

It belongs to the Lgt family.

It is found in the cell membrane. The enzyme catalyses L-cysteinyl-[prolipoprotein] + a 1,2-diacyl-sn-glycero-3-phospho-(1'-sn-glycerol) = an S-1,2-diacyl-sn-glyceryl-L-cysteinyl-[prolipoprotein] + sn-glycerol 1-phosphate + H(+). It functions in the pathway protein modification; lipoprotein biosynthesis (diacylglyceryl transfer). Its function is as follows. Catalyzes the transfer of the diacylglyceryl group from phosphatidylglycerol to the sulfhydryl group of the N-terminal cysteine of a prolipoprotein, the first step in the formation of mature lipoproteins. The chain is Phosphatidylglycerol--prolipoprotein diacylglyceryl transferase 2 from Clostridium perfringens (strain 13 / Type A).